The following is a 68-amino-acid chain: uncharacterized protein (68 aa).

The HMA domain maps to Lys-2–Thr-67. A metal cation contacts are provided by Cys-13 and Cys-16.

This is an uncharacterized protein from Haemophilus influenzae (strain ATCC 51907 / DSM 11121 / KW20 / Rd).